The primary structure comprises 137 residues: Protein apnoia (137 aa).

3 helical membrane-spanning segments follow: residues 7-27 (IVFA…QQQA), 55-75 (LVPG…LTVV), and 76-96 (SIKG…QMLS).

As to quaternary structure, interacts with crb.

The protein localises to the apical cell membrane. Functionally, transmembrane protein that plays a key role in trachea development by regulating crb localization and maintenance at the apical cell membrane. Required for anisotropic apical surface expansion important for tracheal tube elongation and lumen stability at larval stages. This is Protein apnoia from Drosophila melanogaster (Fruit fly).